A 323-amino-acid chain; its full sequence is Transposase for insertion sequence element IS6120 (323 aa).

Positions 300–323 are disordered; sequence ERPTDITPPTSPSDGGQHAGTEVA. A compositionally biased stretch (low complexity) spans 304–313; that stretch reads DITPPTSPSD.

It belongs to the transposase mutator family.

Required for the transposition of the insertion element. In Mycolicibacterium smegmatis (Mycobacterium smegmatis), this protein is Transposase for insertion sequence element IS6120.